The chain runs to 134 residues: Sec-independent protein translocase protein TatB (134 aa).

The chain crosses the membrane as a helical span at residues 2–22 (FDGIGFMELLLIGILGLVVLG). The segment at 90 to 134 (AESVNRPYKVEDTSPVAPKASPDESPSVVEAKSSEATSENSSTPK) is disordered. Positions 123-134 (SEATSENSSTPK) are enriched in polar residues.

Belongs to the TatB family. In terms of assembly, the Tat system comprises two distinct complexes: a TatABC complex, containing multiple copies of TatA, TatB and TatC subunits, and a separate TatA complex, containing only TatA subunits. Substrates initially bind to the TatABC complex, which probably triggers association of the separate TatA complex to form the active translocon.

It localises to the cell inner membrane. Its function is as follows. Part of the twin-arginine translocation (Tat) system that transports large folded proteins containing a characteristic twin-arginine motif in their signal peptide across membranes. Together with TatC, TatB is part of a receptor directly interacting with Tat signal peptides. TatB may form an oligomeric binding site that transiently accommodates folded Tat precursor proteins before their translocation. The protein is Sec-independent protein translocase protein TatB of Shewanella frigidimarina (strain NCIMB 400).